The sequence spans 1261 residues: ABC-type transmembrane transporter verA (1261 aa).

Residues Ile-41–Leu-61 traverse the membrane as a helical segment. One can recognise an ABC transmembrane type-1 1 domain in the interval Ile-41–Lys-334. Residue Asn-67 is glycosylated (N-linked (GlcNAc...) asparagine). The next 5 helical transmembrane spans lie at Leu-92–Phe-112, Leu-166–Gln-186, Leu-190–Ser-210, Phe-270–Phe-290, and Ile-308–Asn-328. The ABC transporter 1 domain occupies Val-374–Ala-618. Asn-396 carries N-linked (GlcNAc...) asparagine glycosylation. Gly-409–Ser-416 is a binding site for ATP. The N-linked (GlcNAc...) asparagine glycan is linked to Asn-463. 6 helical membrane-spanning segments follow: residues Tyr-686–Val-706, Leu-734–Met-754, Met-808–Tyr-828, Trp-830–Leu-850, Val-913–Phe-933, and Phe-950–Phe-970. In terms of domain architecture, ABC transmembrane type-1 2 spans Leu-691–Lys-976. Residues Asn-1007 and Asn-1021 are each glycosylated (N-linked (GlcNAc...) asparagine). Residues Val-1017–Ser-1255 form the ABC transporter 2 domain. Residue Gly-1052–Ser-1059 coordinates ATP. A glycan (N-linked (GlcNAc...) asparagine) is linked at Asn-1106.

Belongs to the ABC transporter superfamily. ABCB family. Multidrug resistance exporter (TC 3.A.1.201) subfamily.

Its subcellular location is the cell membrane. Functionally, ABC-type transmembrane transporter; part of the gene cluster that mediates the biosynthesis of 11'-deoxyverticillin A, one of the dimeric epipolythiodioxopiperazines (ETPs) from the verticillin family that are toxic secondary metabolites. The verA multidrug transporter is probably involved in the secretion of 11'-deoxyverticillin A. This Clonostachys rogersoniana protein is ABC-type transmembrane transporter verA.